The chain runs to 147 residues: Endoribonuclease YbeY (147 aa).

H108, H112, and H118 together coordinate Zn(2+).

The protein belongs to the endoribonuclease YbeY family. The cofactor is Zn(2+).

Its subcellular location is the cytoplasm. In terms of biological role, single strand-specific metallo-endoribonuclease involved in late-stage 70S ribosome quality control and in maturation of the 3' terminus of the 16S rRNA. This chain is Endoribonuclease YbeY, found in Sulfurovum sp. (strain NBC37-1).